Reading from the N-terminus, the 290-residue chain is Porphobilinogen deaminase (290 aa).

C237 carries the post-translational modification S-(dipyrrolylmethanemethyl)cysteine.

Belongs to the HMBS family. As to quaternary structure, monomer. The cofactor is dipyrromethane.

It catalyses the reaction 4 porphobilinogen + H2O = hydroxymethylbilane + 4 NH4(+). It functions in the pathway porphyrin-containing compound metabolism; protoporphyrin-IX biosynthesis; coproporphyrinogen-III from 5-aminolevulinate: step 2/4. Tetrapolymerization of the monopyrrole PBG into the hydroxymethylbilane pre-uroporphyrinogen in several discrete steps. This Clostridium kluyveri (strain NBRC 12016) protein is Porphobilinogen deaminase.